We begin with the raw amino-acid sequence, 184 residues long: Adenine phosphoribosyltransferase (184 aa).

Belongs to the purine/pyrimidine phosphoribosyltransferase family. Homodimer.

The protein localises to the cytoplasm. The enzyme catalyses AMP + diphosphate = 5-phospho-alpha-D-ribose 1-diphosphate + adenine. The protein operates within purine metabolism; AMP biosynthesis via salvage pathway; AMP from adenine: step 1/1. Catalyzes a salvage reaction resulting in the formation of AMP, that is energically less costly than de novo synthesis. The protein is Adenine phosphoribosyltransferase of Mycobacterium marinum (strain ATCC BAA-535 / M).